The following is a 127-amino-acid chain: UPF0325 protein VP2321 (127 aa).

It belongs to the UPF0325 family.

The protein is UPF0325 protein VP2321 of Vibrio parahaemolyticus serotype O3:K6 (strain RIMD 2210633).